Consider the following 289-residue polypeptide: Protease HtpX homolog (289 aa).

The next 2 helical transmembrane spans lie at Ile-3 to Phe-23 and Thr-28 to Gly-48. His-129 lines the Zn(2+) pocket. The active site involves Glu-130. Zn(2+) is bound at residue His-133. Transmembrane regions (helical) follow at residues Leu-144 to Gly-164 and Phe-172 to Ile-192. Zn(2+) is bound at residue Glu-197. The disordered stretch occupies residues Ser-222–Asp-250. Residues Arg-235–Gly-246 are compositionally biased toward basic residues.

The protein belongs to the peptidase M48B family. Zn(2+) is required as a cofactor.

The protein resides in the cell membrane. The sequence is that of Protease HtpX homolog from Halobacterium salinarum (strain ATCC 700922 / JCM 11081 / NRC-1) (Halobacterium halobium).